We begin with the raw amino-acid sequence, 360 residues long: S-adenosylmethionine:tRNA ribosyltransferase-isomerase (360 aa).

This sequence belongs to the QueA family. Monomer.

It is found in the cytoplasm. The enzyme catalyses 7-aminomethyl-7-carbaguanosine(34) in tRNA + S-adenosyl-L-methionine = epoxyqueuosine(34) in tRNA + adenine + L-methionine + 2 H(+). Its pathway is tRNA modification; tRNA-queuosine biosynthesis. Its function is as follows. Transfers and isomerizes the ribose moiety from AdoMet to the 7-aminomethyl group of 7-deazaguanine (preQ1-tRNA) to give epoxyqueuosine (oQ-tRNA). The chain is S-adenosylmethionine:tRNA ribosyltransferase-isomerase from Nitrobacter winogradskyi (strain ATCC 25391 / DSM 10237 / CIP 104748 / NCIMB 11846 / Nb-255).